The following is a 127-amino-acid chain: Large ribosomal subunit protein bL20 (127 aa).

The protein belongs to the bacterial ribosomal protein bL20 family.

Binds directly to 23S ribosomal RNA and is necessary for the in vitro assembly process of the 50S ribosomal subunit. It is not involved in the protein synthesizing functions of that subunit. This Bifidobacterium longum (strain DJO10A) protein is Large ribosomal subunit protein bL20.